A 342-amino-acid polypeptide reads, in one-letter code: Probable deoxyhypusine synthase (342 aa).

K307 (nucleophile) is an active-site residue.

This sequence belongs to the deoxyhypusine synthase family. It depends on NAD(+) as a cofactor.

It catalyses the reaction [eIF5A protein]-L-lysine + spermidine = [eIF5A protein]-deoxyhypusine + propane-1,3-diamine. It functions in the pathway protein modification; eIF5A hypusination. Catalyzes the NAD-dependent oxidative cleavage of spermidine and the subsequent transfer of the butylamine moiety of spermidine to the epsilon-amino group of a specific lysine residue of the eIF-5A precursor protein to form the intermediate deoxyhypusine residue. This chain is Probable deoxyhypusine synthase (dys), found in Pyrococcus horikoshii (strain ATCC 700860 / DSM 12428 / JCM 9974 / NBRC 100139 / OT-3).